Here is a 92-residue protein sequence, read N- to C-terminus: Large ribosomal subunit protein uL23c (92 aa).

It belongs to the universal ribosomal protein uL23 family. In terms of assembly, part of the 50S ribosomal subunit.

It localises to the plastid. The protein localises to the chloroplast. Functionally, binds to 23S rRNA. In Nephroselmis olivacea (Green alga), this protein is Large ribosomal subunit protein uL23c (rpl23).